The primary structure comprises 620 residues: Mitochondrial Rho GTPase 2 (620 aa).

Residues methionine 1–arginine 594 lie on the Cytoplasmic side of the membrane. One can recognise a Miro 1 domain in the interval lysine 2–histidine 168. Positions 16, 17, 18, and 19 each coordinate GTP. Residue threonine 18 participates in Mg(2+) binding. Mg(2+)-binding residues include proline 35 and aspartate 57. Position 59 (serine 59) interacts with GTP. Residue lysine 96 forms a Glycyl lysine isopeptide (Lys-Gly) (interchain with G-Cter in ubiquitin) linkage. GTP-binding residues include asparagine 118, lysine 119, aspartate 121, alanine 149, and lysine 150. Residue lysine 119 forms a Glycyl lysine isopeptide (Lys-Gly) (interchain with G-Cter in ubiquitin) linkage. Lysine 164 is covalently cross-linked (Glycyl lysine isopeptide (Lys-Gly) (interchain with G-Cter in ubiquitin)). 2 EF-hand domains span residues alanine 184–histidine 219 and histidine 304–proline 339. Residues aspartate 197, aspartate 199, aspartate 201, glutamate 208, aspartate 317, aspartate 319, aspartate 321, and glutamate 328 each coordinate Ca(2+). The interval proline 340 to proline 364 is disordered. The Miro 2 domain maps to arginine 415 to phenylalanine 578. Positions 427, 429, 430, and 431 each coordinate GTP. The Mg(2+) site is built by serine 431 and glutamate 473. Residues lysine 527, aspartate 529, and cysteine 558 each contribute to the GTP site. A helical; Anchor for type IV membrane protein transmembrane segment spans residues valine 595 to valine 617. At lysine 618–arginine 620 the chain is on the mitochondrial intermembrane side.

The protein belongs to the mitochondrial Rho GTPase family. As to quaternary structure, homodimer. Interacts with the kinesin-binding proteins TRAK1/OIP106 and TRAK2/GRIF1, forming a link between mitochondria and the trafficking apparatus of the microtubules. Interacts with ARMCX3. Found in a complex with KIF5B, OGT, RHOT1 and TRAK1. In terms of processing, ubiquitinated by PRKN in a PINK1-dependent manner, leading to its degradation.

It localises to the mitochondrion outer membrane. The catalysed reaction is GTP + H2O = GDP + phosphate + H(+). It catalyses the reaction ATP + H2O = ADP + phosphate + H(+). It carries out the reaction UTP + H2O = UDP + phosphate + H(+). Atypical mitochondrial nucleoside-triphosphatase (NTPase) involved in mitochondrial trafficking. Probably involved in control of anterograde transport of mitochondria and their subcellular distribution. Can hydrolyze GTP, ATP and UTP. This is Mitochondrial Rho GTPase 2 (RHOT2) from Sus scrofa (Pig).